We begin with the raw amino-acid sequence, 265 residues long: UPF0354 protein GTNG_2723 (265 aa).

Belongs to the UPF0354 family.

The sequence is that of UPF0354 protein GTNG_2723 from Geobacillus thermodenitrificans (strain NG80-2).